We begin with the raw amino-acid sequence, 69 residues long: Lantibiotic lichenicidin A2 (69 aa).

Positions 1 to 37 (MKNSAAREAFKGANHPAGMVSEEELKALVGGNDVNPE) are excised as a propeptide. The residue at position 38 (T38) is a 2-oxobutanoic acid. 3 positions are modified to (Z)-2,3-didehydrobutyrine: T39, T42, and T43. Positions 44 to 48 (SSWTC) form a cross-link, lanthionine (Ser-Cys). The residue at position 45 (S45) is a 2,3-didehydroalanine (Ser). A (Z)-2,3-didehydrobutyrine mark is found at T50 and T54. Positions 56-60 (SASLC) form a cross-link, lanthionine (Ser-Cys). 2 consecutive cross-links (beta-methyllanthionine (Thr-Cys)) follow at residues 62 to 65 (TTKC) and 66 to 69 (TSRC). The residue at position 63 (T63) is a (Z)-2,3-didehydrobutyrine.

In terms of processing, maturation of lantibiotics involves the enzymatic conversion of Thr, and Ser into dehydrated AA and the formation of thioether bonds with cysteine. This is followed by membrane translocation and cleavage of the modified precursor.

It is found in the secreted. Its subcellular location is the cell wall. In terms of biological role, lanthionine-containing peptide antibiotic (lantibiotic) active on Gram-positive bacteria. The bactericidal activity of lantibiotics is based on depolarization of energized bacterial cytoplasmic membranes, initiated by the formation of aqueous transmembrane pores. When present individually, LchA2 exhibits activity towards L.lactis HP. When combined with LchA1, it displays activity towards a broad spectrum of non-pathogenic and pathogenic Gram-positive bacteria including strains of L.monocytogenes, methicillin-resistant S.aureus, S.pneumoniae and strains of vancomycin-resistant enterococci, but not towards E.faecium L4001 and BM4147-1. Combined LchA1 and LchA2 peptides also inhibit Bacillus sp. HIL-Y85/54728, L.lactis DPC3417 and B.halodurans C-125, which produce lantibiotics themselves. Inactivated by proteinase K and pronase E, but not by trypsin and chymotrypsin. This Bacillus licheniformis (strain ATCC 14580 / DSM 13 / JCM 2505 / CCUG 7422 / NBRC 12200 / NCIMB 9375 / NCTC 10341 / NRRL NRS-1264 / Gibson 46) protein is Lantibiotic lichenicidin A2.